The primary structure comprises 469 residues: Putative pyridoxal-dependent decarboxylase domain-containing protein 2 (469 aa).

Residues 12-40 (TLAEMGKNLKEAVKMLEDSQRRTEEENGK) adopt a coiled-coil conformation. A compositionally biased stretch (basic and acidic residues) spans 28 to 44 (EDSQRRTEEENGKKLIS). A disordered region spans residues 28 to 47 (EDSQRRTEEENGKKLISRDI).

Belongs to the group II decarboxylase family. It depends on pyridoxal 5'-phosphate as a cofactor.

This is Putative pyridoxal-dependent decarboxylase domain-containing protein 2 (PDXDC2P) from Homo sapiens (Human).